The sequence spans 194 residues: Glycerol-3-phosphate acyltransferase (194 aa).

5 helical membrane-spanning segments follow: residues Leu2–Leu22, Ser51–Ala71, Trp80–Phe100, Val112–Val132, and Phe155–Trp175.

This sequence belongs to the PlsY family. In terms of assembly, probably interacts with PlsX.

It is found in the cell inner membrane. It catalyses the reaction an acyl phosphate + sn-glycerol 3-phosphate = a 1-acyl-sn-glycero-3-phosphate + phosphate. The protein operates within lipid metabolism; phospholipid metabolism. Its function is as follows. Catalyzes the transfer of an acyl group from acyl-phosphate (acyl-PO(4)) to glycerol-3-phosphate (G3P) to form lysophosphatidic acid (LPA). This enzyme utilizes acyl-phosphate as fatty acyl donor, but not acyl-CoA or acyl-ACP. In Geobacter metallireducens (strain ATCC 53774 / DSM 7210 / GS-15), this protein is Glycerol-3-phosphate acyltransferase.